The sequence spans 365 residues: tRNA 2-selenouridine synthase (365 aa).

One can recognise a Rhodanese domain in the interval 15–138; it reads FVNDHPIMDA…MRQFLIETID (124 aa). The active-site S-selanylcysteine intermediate is the C98.

It belongs to the SelU family. In terms of assembly, monomer.

It carries out the reaction 5-methylaminomethyl-2-thiouridine(34) in tRNA + selenophosphate + (2E)-geranyl diphosphate + H2O + H(+) = 5-methylaminomethyl-2-selenouridine(34) in tRNA + (2E)-thiogeraniol + phosphate + diphosphate. The enzyme catalyses 5-methylaminomethyl-2-thiouridine(34) in tRNA + (2E)-geranyl diphosphate = 5-methylaminomethyl-S-(2E)-geranyl-thiouridine(34) in tRNA + diphosphate. The catalysed reaction is 5-methylaminomethyl-S-(2E)-geranyl-thiouridine(34) in tRNA + selenophosphate + H(+) = 5-methylaminomethyl-2-(Se-phospho)selenouridine(34) in tRNA + (2E)-thiogeraniol. It catalyses the reaction 5-methylaminomethyl-2-(Se-phospho)selenouridine(34) in tRNA + H2O = 5-methylaminomethyl-2-selenouridine(34) in tRNA + phosphate. In terms of biological role, involved in the post-transcriptional modification of the uridine at the wobble position (U34) of tRNA(Lys), tRNA(Glu) and tRNA(Gln). Catalyzes the conversion of 2-thiouridine (S2U-RNA) to 2-selenouridine (Se2U-RNA). Acts in a two-step process involving geranylation of 2-thiouridine (S2U) to S-geranyl-2-thiouridine (geS2U) and subsequent selenation of the latter derivative to 2-selenouridine (Se2U) in the tRNA chain. The protein is tRNA 2-selenouridine synthase of Shewanella halifaxensis (strain HAW-EB4).